Reading from the N-terminus, the 355-residue chain is Peptide chain release factor 1 (355 aa).

An N5-methylglutamine modification is found at Gln-231. Residues 283–292 (LAKETSERKS) are compositionally biased toward basic and acidic residues. Residues 283–306 (LAKETSERKSQVGTGDRSGRIRTY) form a disordered region.

It belongs to the prokaryotic/mitochondrial release factor family. Methylated by PrmC. Methylation increases the termination efficiency of RF1.

The protein resides in the cytoplasm. Peptide chain release factor 1 directs the termination of translation in response to the peptide chain termination codons UAG and UAA. The protein is Peptide chain release factor 1 of Campylobacter concisus (strain 13826).